The chain runs to 499 residues: Aldehyde dehydrogenase 1 (499 aa).

NAD(+) is bound by residues 164–166 (IPW), 164–167 (IPWN), 190–193 (KPAE), 223–224 (GS), 243–244 (GS), 243–248 (GSTKVG), and 266–268 (ELG). E266 functions as the Proton acceptor in the catalytic mechanism. The active-site Nucleophile is the C300. Residues 346-350 (QQYEK) and 397-399 (EIF) contribute to the NAD(+) site.

This sequence belongs to the aldehyde dehydrogenase family. As to quaternary structure, homotetramer. In terms of tissue distribution, expressed in flowers and disk florets.

The catalysed reaction is an aldehyde + NAD(+) + H2O = a carboxylate + NADH + 2 H(+). It catalyses the reaction an aldehyde + NADP(+) + H2O = a carboxylate + NADPH + 2 H(+). It carries out the reaction octanal + NADP(+) + H2O = octanoate + NADPH + 2 H(+). The enzyme catalyses (1R,3R)-chrysanthemal + NAD(+) + H2O = (1R,3R)-chrysanthemate + NADH + 2 H(+). The catalysed reaction is (1R,3R)-chrysanthemal + NADP(+) + H2O = (1R,3R)-chrysanthemate + NADPH + 2 H(+). It catalyses the reaction (E)-hept-2-enal + NADP(+) + H2O = (E)-hept-2-enoate + NADPH + 2 H(+). It carries out the reaction dodecanal + NADP(+) + H2O = dodecanoate + NADPH + 2 H(+). The enzyme catalyses citral + NADP(+) + H2O = 3,7-dimethylocta-2,6-dienoate + NADPH + 2 H(+). The catalysed reaction is perillyl aldehyde + NADP(+) + H2O = perillate + NADPH + 2 H(+). It catalyses the reaction (2E,6E)-farnesal + NADP(+) + H2O = (2E,6E)-farnesoate + NADPH + 2 H(+). It carries out the reaction (S)-(-)-citronellal + NADP(+) + H2O = (S)-(-)-citronellate + NADPH + 2 H(+). Its pathway is isoprenoid biosynthesis. Component of the monoterpenoid pyrethrins biosynthesis; pyrethrins are widely used plant-derived pesticide. Mediates the conversion of trans-chrysanthemal into trans-chrysanthemic acid. Can also use octanal, hept-2-enal, dodecanal, citral, farnesal, citronellal and perillyl aldehyde as substrates. The protein is Aldehyde dehydrogenase 1 of Tanacetum cinerariifolium (Dalmatian daisy).